A 261-amino-acid chain; its full sequence is MPNLLEKTRKITSILQRSVDSLDAELPYNTMAAQLADIIDCNACIINGGGNLLGYAMKYKTNTDRVEEFFETKQFPDYYVKSASRVYDTEANLSVDNDLSIFPVETKENFQDGITTIAPIYGGGMRLGTFIIWRNDKEFSDDDLILVEIASTVVGIQLLNLQTENLEENIRKQTAVTMAINTLSYSEMKAVAAILGELDGLEGRLTASVIADRIGITRSVIVNALRKLESAGIIESRSLGMKGTYLKVINEGIFDKLKEYN.

Residues 1–159 (MPNLLEKTRK…ASTVVGIQLL (159 aa)) are GAF domain. The H-T-H motif DNA-binding region spans 207–226 (ASVIADRIGITRSVIVNALR).

Belongs to the CodY family.

The protein localises to the cytoplasm. DNA-binding global transcriptional regulator which is involved in the adaptive response to starvation and acts by directly or indirectly controlling the expression of numerous genes in response to nutrient availability. During rapid exponential growth, CodY is highly active and represses genes whose products allow adaptation to nutrient depletion. The sequence is that of Global transcriptional regulator CodY from Streptococcus agalactiae serotype III (strain NEM316).